An 85-amino-acid polypeptide reads, in one-letter code: RDS3 complex subunit 10 (85 aa).

As to quaternary structure, belongs to the SF3b complex composed of CUS1, HSH49, HSH155, RCP1, RDS3 and RSE1.

Its subcellular location is the nucleus. Its function is as follows. Involved in pre-mRNA splicing. Required for the SF3b integrity and prespliceosome assembly. This Saccharomyces cerevisiae (strain ATCC 204508 / S288c) (Baker's yeast) protein is RDS3 complex subunit 10 (YSF3).